A 293-amino-acid chain; its full sequence is MFRGSITALVTPFRQDGSLDKKAFGALVEWQIAEGSSGLVPVGTTGESPTLTHDEHQEVIRLCVEAANKRVPVIAGAGSNSTREAISFAEHAEKVGADALLVVTPYYNKPNQRGLYEHFAAIARSTSLPIFIYNIPPRSVVDMLPETMARLAADFKNIVGVKDATAKLDRVSEQREACGPDFIQLSGEDATALGFNAHGGVGCISVTANVAPRLCAEFQAASLRGDGARAIELQDRLFPLHKALFLEPNPAGAKYALSRLGRLENVLRSPLVTVEASTAEKIDAAMKHAGLLN.

Position 45 (Thr-45) interacts with pyruvate. Tyr-133 (proton donor/acceptor) is an active-site residue. The Schiff-base intermediate with substrate role is filled by Lys-162. Ile-204 is a pyruvate binding site.

This sequence belongs to the DapA family. As to quaternary structure, homotetramer; dimer of dimers.

Its subcellular location is the cytoplasm. The enzyme catalyses L-aspartate 4-semialdehyde + pyruvate = (2S,4S)-4-hydroxy-2,3,4,5-tetrahydrodipicolinate + H2O + H(+). It participates in amino-acid biosynthesis; L-lysine biosynthesis via DAP pathway; (S)-tetrahydrodipicolinate from L-aspartate: step 3/4. In terms of biological role, catalyzes the condensation of (S)-aspartate-beta-semialdehyde [(S)-ASA] and pyruvate to 4-hydroxy-tetrahydrodipicolinate (HTPA). The sequence is that of 4-hydroxy-tetrahydrodipicolinate synthase from Chelativorans sp. (strain BNC1).